The primary structure comprises 635 residues: Threonine--tRNA ligase (635 aa).

Residues M1 to T58 form the TGS domain. Residues D237–P528 form a catalytic region. C328, H379, and H505 together coordinate Zn(2+).

This sequence belongs to the class-II aminoacyl-tRNA synthetase family. As to quaternary structure, homodimer. It depends on Zn(2+) as a cofactor.

The protein resides in the cytoplasm. The catalysed reaction is tRNA(Thr) + L-threonine + ATP = L-threonyl-tRNA(Thr) + AMP + diphosphate + H(+). In terms of biological role, catalyzes the attachment of threonine to tRNA(Thr) in a two-step reaction: L-threonine is first activated by ATP to form Thr-AMP and then transferred to the acceptor end of tRNA(Thr). Also edits incorrectly charged L-seryl-tRNA(Thr). In Chlamydia trachomatis serovar L2b (strain UCH-1/proctitis), this protein is Threonine--tRNA ligase.